Reading from the N-terminus, the 306-residue chain is MADTKSSNCNEHFSVEKLKEWPEPESVSLMKELAREDIDEAVHAILFRENYIVKKLDTYLQHEAVFKERRKEMLHKKWVENVAQPLQQRIIEKLFSYRRPGKSQVKYEYCLKHTNEPTKPSPLCECLFQKQQALREAKGPSYHRGRGKQPGIQKEAKETEKGLLFTRSPQFPLRSHCTVPRDRQRLHARFVQNKPCGRNKYKGAGSEKVSYALKPHLPKEEKKTVNRSQLGFERQFHASKLSQQNKGAEKKGLALGTRAQRPRSWAAADSPQGTPLVGRRVMTAEILGKHLASLQQASRAVYSNSP.

A disordered region spans residues H237–V277. S270 carries the post-translational modification Phosphoserine.

It belongs to the FAM228 family.

In Rattus norvegicus (Rat), this protein is Protein FAM228A (Fam228a).